The following is a 396-amino-acid chain: DNA polymerase IV (396 aa).

Residues 2-182 (ILHVDMDAFY…LPVSRLWGVG (181 aa)) form the UmuC domain. Residues Asp-6 and Asp-100 each coordinate Mg(2+). Glu-101 is an active-site residue.

The protein belongs to the DNA polymerase type-Y family. Monomer. Mg(2+) serves as cofactor.

Its subcellular location is the cytoplasm. It carries out the reaction DNA(n) + a 2'-deoxyribonucleoside 5'-triphosphate = DNA(n+1) + diphosphate. In terms of biological role, poorly processive, error-prone DNA polymerase involved in untargeted mutagenesis. Copies undamaged DNA at stalled replication forks, which arise in vivo from mismatched or misaligned primer ends. These misaligned primers can be extended by PolIV. Exhibits no 3'-5' exonuclease (proofreading) activity. May be involved in translesional synthesis, in conjunction with the beta clamp from PolIII. The chain is DNA polymerase IV from Rhodopirellula baltica (strain DSM 10527 / NCIMB 13988 / SH1).